The primary structure comprises 341 residues: Glyceraldehyde-3-phosphate dehydrogenase 2 (341 aa).

Residues 12-13, arginine 78, and threonine 120 contribute to the NAD(+) site; that span reads RI. Residues 152 to 154 and threonine 183 each bind D-glyceraldehyde 3-phosphate; that span reads SCT. Cysteine 153 (nucleophile) is an active-site residue. Asparagine 184 is a binding site for NAD(+). D-glyceraldehyde 3-phosphate-binding positions include arginine 198, 211 to 212, and arginine 234; that span reads TG. An NAD(+)-binding site is contributed by asparagine 313.

This sequence belongs to the glyceraldehyde-3-phosphate dehydrogenase family. As to quaternary structure, homotetramer.

The protein resides in the cytoplasm. It carries out the reaction D-glyceraldehyde 3-phosphate + phosphate + NAD(+) = (2R)-3-phospho-glyceroyl phosphate + NADH + H(+). The protein operates within carbohydrate degradation; glycolysis; pyruvate from D-glyceraldehyde 3-phosphate: step 1/5. Its function is as follows. Catalyzes the oxidative phosphorylation of glyceraldehyde 3-phosphate (G3P) to 1,3-bisphosphoglycerate (BPG) using the cofactor NAD. The first reaction step involves the formation of a hemiacetal intermediate between G3P and a cysteine residue, and this hemiacetal intermediate is then oxidized to a thioester, with concomitant reduction of NAD to NADH. The reduced NADH is then exchanged with the second NAD, and the thioester is attacked by a nucleophilic inorganic phosphate to produce BPG. This chain is Glyceraldehyde-3-phosphate dehydrogenase 2 (gapA2), found in Staphylococcus aureus (strain MRSA252).